We begin with the raw amino-acid sequence, 109 residues long: Nucleoid-associated protein Spro_1136 (109 aa).

Disordered regions lie at residues 1 to 21 (MFGK…QEKM) and 90 to 109 (EKMA…KMPF). Residues 11 to 21 (MKQAQQMQEKM) are compositionally biased toward low complexity.

The protein belongs to the YbaB/EbfC family. Homodimer.

It localises to the cytoplasm. The protein resides in the nucleoid. Its function is as follows. Binds to DNA and alters its conformation. May be involved in regulation of gene expression, nucleoid organization and DNA protection. The polypeptide is Nucleoid-associated protein Spro_1136 (Serratia proteamaculans (strain 568)).